The following is a 492-amino-acid chain: MNNLVKLTISQAVSGLKNKEFTATDLVTAHINQMDKYRYINSYITEIPELALQAAKKSDFLIQNNQARPIEGIPVSIKDLFCTKGILTTAASKMLQNFTPVYDATAYSKIINAGGIMLGKGNMDEFAMGSANINSYFGNVINPWKAESDDVDLTPGGSSGGSSAAVAAFMAMAALGSDTGGSVRQPASYTGTVGIKPSYGRCSRWGMIAFSCSLDQPGVITRTVEDAAIMLEIMMGYDEKDSTSLNAEVPNLRSAVNQPIKGMKIGIPYDLMENRSLSSEIITMWQNTINLLKDHGVEIVSIGLPYINYALPVYYVLSSAEASSNLARYDGVRYGLRVEGKDSNINEIYELSRSEGFGAEVKRRIMMGTYALASTNINSYYIKAQQVRRLIVNDFTNSFNKVDCILIPSAPTAAFPLNSNQDDPVTMYLNDILTIPASLAGLPCISIPAGFSANKLPLGMQVIGSRLDEYNIIKISSAIEKALNLKFIPKGF.

Catalysis depends on charge relay system residues lysine 78 and serine 158. Residue serine 182 is the Acyl-ester intermediate of the active site.

Belongs to the amidase family. GatA subfamily. In terms of assembly, heterotrimer of A, B and C subunits.

The catalysed reaction is L-glutamyl-tRNA(Gln) + L-glutamine + ATP + H2O = L-glutaminyl-tRNA(Gln) + L-glutamate + ADP + phosphate + H(+). Its function is as follows. Allows the formation of correctly charged Gln-tRNA(Gln) through the transamidation of misacylated Glu-tRNA(Gln) in organisms which lack glutaminyl-tRNA synthetase. The reaction takes place in the presence of glutamine and ATP through an activated gamma-phospho-Glu-tRNA(Gln). The protein is Glutamyl-tRNA(Gln) amidotransferase subunit A of Orientia tsutsugamushi (strain Boryong) (Rickettsia tsutsugamushi).